A 112-amino-acid chain; its full sequence is CENP-A recruiting complex protein mis19 (112 aa).

As to quaternary structure, component of the CENP-A recruiting complex composed of at least mis16, mis19, mis19 and mis20.

It is found in the chromosome. It localises to the centromere. The protein resides in the kinetochore. Functionally, component of the CENP-A recruiting complex that ensures the integrity of mitotic spindles through maintenance of kinetochore factors mis6/CENP-I and cnp1/CENP-A. Links mis16 and mis18 to recruit CENP-A through interacting with non-sense-mediated mRNA decay (NMD) factors and the SWI/SNF complex. Also links mis18 with the CCAN/mis6/ctf19 complex to promote CENP-A assembly. In Schizosaccharomyces pombe (strain 972 / ATCC 24843) (Fission yeast), this protein is CENP-A recruiting complex protein mis19.